We begin with the raw amino-acid sequence, 395 residues long: Dual specificity protein phosphatase 4 (395 aa).

At Val2 the chain carries N-acetylvaline. In terms of domain architecture, Rhodanese spans 42–160; the sequence is SGGKCLLLDC…FSSEYPEFCS (119 aa). One can recognise a Tyrosine-protein phosphatase domain in the interval 196–337; the sequence is GPVEILPFLY…LLQFESQVLT (142 aa). The active-site Phosphocysteine intermediate is Cys281. Residues Ser387 and Ser392 each carry the phosphoserine; by MAPK modification.

The protein belongs to the protein-tyrosine phosphatase family. Non-receptor class dual specificity subfamily. As to quaternary structure, hollow spherical complex composed of 24 subunits with pseudooctahedral symmetry, has a tetramer as the basic unit. Phosphorylation in the C-terminus by ERK1/2 inhibits proteasomal degradation and stabilizes the protein. In terms of tissue distribution, expressed at moderate levels in nearly all tissues and cells including brain, spleen, and testes with the higher expression in the heart and lung and lower expression in skeletal muscle and kidney. Undetectable in liver. Expressed in many areas of the brain with very strong expression in the hippocampus, piriform cortex, and the suprachiasmatic nucleus.

It is found in the nucleus. It carries out the reaction O-phospho-L-tyrosyl-[protein] + H2O = L-tyrosyl-[protein] + phosphate. The catalysed reaction is O-phospho-L-seryl-[protein] + H2O = L-seryl-[protein] + phosphate. The enzyme catalyses O-phospho-L-threonyl-[protein] + H2O = L-threonyl-[protein] + phosphate. In terms of biological role, regulates mitogenic signal transduction by dephosphorylating both Thr and Tyr residues on MAP kinases ERK1 and ERK2. The chain is Dual specificity protein phosphatase 4 (Dusp4) from Rattus norvegicus (Rat).